We begin with the raw amino-acid sequence, 307 residues long: tRNA dimethylallyltransferase (307 aa).

9-16 (GATGTGKS) contacts ATP. 11–16 (TGTGKS) is a binding site for substrate.

The protein belongs to the IPP transferase family. In terms of assembly, monomer. Mg(2+) serves as cofactor.

It catalyses the reaction adenosine(37) in tRNA + dimethylallyl diphosphate = N(6)-dimethylallyladenosine(37) in tRNA + diphosphate. Functionally, catalyzes the transfer of a dimethylallyl group onto the adenine at position 37 in tRNAs that read codons beginning with uridine, leading to the formation of N6-(dimethylallyl)adenosine (i(6)A). This chain is tRNA dimethylallyltransferase, found in Clavibacter sepedonicus (Clavibacter michiganensis subsp. sepedonicus).